The sequence spans 344 residues: Uroporphyrinogen decarboxylase (344 aa).

Substrate-binding positions include 26–30, aspartate 75, tyrosine 150, serine 205, and histidine 323; that span reads RQAGR.

The protein belongs to the uroporphyrinogen decarboxylase family. Homodimer.

Its subcellular location is the cytoplasm. The enzyme catalyses uroporphyrinogen III + 4 H(+) = coproporphyrinogen III + 4 CO2. It participates in porphyrin-containing compound metabolism; protoporphyrin-IX biosynthesis; coproporphyrinogen-III from 5-aminolevulinate: step 4/4. In terms of biological role, catalyzes the decarboxylation of four acetate groups of uroporphyrinogen-III to yield coproporphyrinogen-III. This chain is Uroporphyrinogen decarboxylase, found in Corynebacterium diphtheriae (strain ATCC 700971 / NCTC 13129 / Biotype gravis).